Here is a 304-residue protein sequence, read N- to C-terminus: Putative dihydroorotate dehydrogenase A (fumarate) (304 aa).

FMN-binding positions include Ser-22 and 46-47; that span reads KG. Substrate contacts are provided by residues Lys-46 and 70-74; that span reads NSVGL. Positions 100 and 128 each coordinate FMN. Asn-128 contacts substrate. Cys-131 functions as the Nucleophile in the catalytic mechanism. FMN is bound by residues Lys-166 and Val-192. 193–194 provides a ligand contact to substrate; it reads NT. Residues Gly-218, 244 to 245, and 266 to 267 contribute to the FMN site; these read GG and GT.

This sequence belongs to the dihydroorotate dehydrogenase family. Type 1 subfamily. In terms of assembly, homodimer. Requires FMN as cofactor.

The protein localises to the cytoplasm. It carries out the reaction (S)-dihydroorotate + fumarate = orotate + succinate. Its pathway is pyrimidine metabolism; UMP biosynthesis via de novo pathway. In terms of biological role, catalyzes the conversion of dihydroorotate to orotate with fumarate as the electron acceptor. In Solibacter usitatus (strain Ellin6076), this protein is Putative dihydroorotate dehydrogenase A (fumarate) (pyrD).